The following is a 448-amino-acid chain: Tubulin beta chain (448 aa).

GTP contacts are provided by glutamine 11, glutamate 69, serine 138, glycine 142, threonine 143, glycine 144, asparagine 204, and asparagine 226. Residue glutamate 69 participates in Mg(2+) binding. Residues 425-448 (YQDASISEGEEEYLEEEEPLEHEE) are disordered. The span at 432-448 (EGEEEYLEEEEPLEHEE) shows a compositional bias: acidic residues.

It belongs to the tubulin family. Dimer of alpha and beta chains. A typical microtubule is a hollow water-filled tube with an outer diameter of 25 nm and an inner diameter of 15 nM. Alpha-beta heterodimers associate head-to-tail to form protofilaments running lengthwise along the microtubule wall with the beta-tubulin subunit facing the microtubule plus end conferring a structural polarity. Microtubules usually have 13 protofilaments but different protofilament numbers can be found in some organisms and specialized cells. It depends on Mg(2+) as a cofactor.

The protein resides in the cytoplasm. It is found in the cytoskeleton. Its function is as follows. Tubulin is the major constituent of microtubules, a cylinder consisting of laterally associated linear protofilaments composed of alpha- and beta-tubulin heterodimers. Microtubules grow by the addition of GTP-tubulin dimers to the microtubule end, where a stabilizing cap forms. Below the cap, tubulin dimers are in GDP-bound state, owing to GTPase activity of alpha-tubulin. The protein is Tubulin beta chain (benR) of Aspergillus parasiticus.